An 84-amino-acid polypeptide reads, in one-letter code: Large ribosomal subunit protein bL27 (84 aa).

The segment at 1-22 is disordered; the sequence is MAKTKAGGSTKNGRDSAGRRLG.

The protein belongs to the bacterial ribosomal protein bL27 family.

This chain is Large ribosomal subunit protein bL27, found in Mesomycoplasma hyopneumoniae (strain 232) (Mycoplasma hyopneumoniae).